We begin with the raw amino-acid sequence, 676 residues long: Phosphatidylinositol-3,5-bisphosphate 3-phosphatase MTMR6 (676 aa).

Positions 125-501 constitute a Myotubularin phosphatase domain; that stretch reads GWRRLDWNSE…ARFTVWTAMY (377 aa). Positions 249, 274, and 275 each coordinate a 1,2-diacyl-sn-glycero-3-phospho-(1D-myo-inositol-3,5-bisphosphate). Positions 249, 274, and 275 each coordinate a 1,2-diacyl-sn-glycero-3-phospho-(1D-myo-inositol-3-phosphate). Substrate-binding positions include 249–252, 274–275, and 335–341; these read NKVQ, NI, and CSDGWDR. C335 functions as the Phosphocysteine intermediate in the catalytic mechanism. S336, D337, G338, W339, D340, R341, K377, and R381 together coordinate a 1,2-diacyl-sn-glycero-3-phospho-(1D-myo-inositol-3,5-bisphosphate). The a 1,2-diacyl-sn-glycero-3-phospho-(1D-myo-inositol-3-phosphate) site is built by S336, D337, G338, W339, D340, and R341. A 1,2-diacyl-sn-glycero-3-phospho-(1D-myo-inositol-3-phosphate) is bound at residue R381. Substrate is bound at residue R381. An FYVE-type zinc finger spans residues 618-675; that stretch reads KWQPLRGADRCSNPACRGEFSSTIERRIHCHLCGMIFCRRCLKVSADERERVCDKCKT.

This sequence belongs to the protein-tyrosine phosphatase family. Non-receptor class myotubularin subfamily. As to quaternary structure, heterodimer with mtm-9. Expressed in intestinal cells. Expressed in head neurons, pre-anal ganglion, hypodermal cells, anal depressor muscle and non-neuronal cells in the tail.

Its subcellular location is the cytoplasm. The protein resides in the membrane. It is found in the apical cell membrane. The enzyme catalyses a 1,2-diacyl-sn-glycero-3-phospho-(1D-myo-inositol-3,5-bisphosphate) + H2O = a 1,2-diacyl-sn-glycero-3-phospho-(1D-myo-inositol-5-phosphate) + phosphate. It catalyses the reaction a 1,2-diacyl-sn-glycero-3-phospho-(1D-myo-inositol-3-phosphate) + H2O = a 1,2-diacyl-sn-glycero-3-phospho-(1D-myo-inositol) + phosphate. The catalysed reaction is 1,2-dioctanoyl-sn-glycero-3-phospho-(1D-myo-inositol-3,5-bisphosphate) + H2O = 1,2-dioctanoyl-sn-glycero-3-phospho-(1D-myo-inositol-5-phosphate) + phosphate. It carries out the reaction 1,2-dioctanoyl-sn-glycero-3-phospho-(1-D-myo-inositol-3-phosphate) + H2O = 1,2-dioctanoyl-sn-glycero-3-phospho-(1D-myo-inositol) + phosphate. Functionally, probable lipid phosphatase that specifically dephosphorylates the D-3 position of phosphatidylinositol 3-phosphate and phosphatidylinositol 3,5-bisphosphate, generating phosphatidylinositol and phosphatidylinositol 5-phosphate. In association with mtm-9, plays a role in endosome trafficking probably by regulating phosphatidylinositol-3-phosphate levels. Regulates fluid phase endocytosis in coelomocytes. Controls the endosomal localization of sorting nexin snx-3 and the levels of sorting receptor mig-14. By regulating the retrograde transport of mig-14, may be involved in the secretion of Wnt ligands such as egl-20. Regulates posterior migration of QL neuroblast descendants and the anterior migration of QR neuroblast descendants and HSN neurons during larval development. Involved in the formation of correct synapse number in DA9 motor neurons probably in part by regulating the secretion of Wnt ligand egl-20. This is Phosphatidylinositol-3,5-bisphosphate 3-phosphatase MTMR6 from Caenorhabditis elegans.